A 178-amino-acid chain; its full sequence is Large ribosomal subunit protein uL6 (178 aa).

This sequence belongs to the universal ribosomal protein uL6 family. As to quaternary structure, part of the 50S ribosomal subunit.

This protein binds to the 23S rRNA, and is important in its secondary structure. It is located near the subunit interface in the base of the L7/L12 stalk, and near the tRNA binding site of the peptidyltransferase center. The sequence is that of Large ribosomal subunit protein uL6 from Streptococcus suis (strain 05ZYH33).